The chain runs to 363 residues: UDP-3-O-acylglucosamine N-acyltransferase (363 aa).

His-266 (proton acceptor) is an active-site residue.

Belongs to the transferase hexapeptide repeat family. LpxD subfamily. As to quaternary structure, homotrimer.

It carries out the reaction a UDP-3-O-[(3R)-3-hydroxyacyl]-alpha-D-glucosamine + a (3R)-hydroxyacyl-[ACP] = a UDP-2-N,3-O-bis[(3R)-3-hydroxyacyl]-alpha-D-glucosamine + holo-[ACP] + H(+). The protein operates within bacterial outer membrane biogenesis; LPS lipid A biosynthesis. In terms of biological role, catalyzes the N-acylation of UDP-3-O-acylglucosamine using 3-hydroxyacyl-ACP as the acyl donor. Is involved in the biosynthesis of lipid A, a phosphorylated glycolipid that anchors the lipopolysaccharide to the outer membrane of the cell. The polypeptide is UDP-3-O-acylglucosamine N-acyltransferase (Bordetella pertussis (strain Tohama I / ATCC BAA-589 / NCTC 13251)).